We begin with the raw amino-acid sequence, 216 residues long: MVDITAAELKAAEAIFGDRLELAERYVEHLATSGTERGLIGPREVPRLWSRHVLNCAVIEREIARGSHVADVGSGAGLPGLCLAIARPDLELTLIEPLERRVIWLQEVVDDLGLTNVTVMRTRAELAVGMVNADVVTARAVSALSNLAGLTIPLLGGKGEVVAIKGRSAGEEIEKAAKAIRKLGGVQTSVVVVGEDLLEEPTTVVRIIVNKSQKIA.

S-adenosyl-L-methionine contacts are provided by residues Gly-73, Leu-78, 124–125 (AE), and Arg-139.

This sequence belongs to the methyltransferase superfamily. RNA methyltransferase RsmG family.

The protein localises to the cytoplasm. Specifically methylates the N7 position of guanine in position 518 of 16S rRNA. The chain is Ribosomal RNA small subunit methyltransferase G from Arthrobacter sp. (strain FB24).